The chain runs to 131 residues: Ribonuclease P protein component (131 aa).

It belongs to the RnpA family. Consists of a catalytic RNA component (M1 or rnpB) and a protein subunit.

The catalysed reaction is Endonucleolytic cleavage of RNA, removing 5'-extranucleotides from tRNA precursor.. In terms of biological role, RNaseP catalyzes the removal of the 5'-leader sequence from pre-tRNA to produce the mature 5'-terminus. It can also cleave other RNA substrates such as 4.5S RNA. The protein component plays an auxiliary but essential role in vivo by binding to the 5'-leader sequence and broadening the substrate specificity of the ribozyme. The polypeptide is Ribonuclease P protein component (Acinetobacter baylyi (strain ATCC 33305 / BD413 / ADP1)).